The sequence spans 651 residues: Peptide-N(4)-(N-acetyl-beta-glucosaminyl)asparagine amidase (651 aa).

Ala2 bears the N-acetylalanine mark. One can recognise a PUB domain in the interval 30 to 91; the sequence is EASKLLLTYA…EGETHLIFPK (62 aa). Zn(2+) is bound by residues Cys247, Cys250, Cys280, and Cys283. The Nucleophile role is filled by Cys306. Residues His333 and Asp350 contribute to the active site. The 201-residue stretch at 451–651 folds into the PAW domain; that stretch reads ELGGRVSGSL…LEIIITFNDL (201 aa).

The protein belongs to the transglutaminase-like superfamily. PNGase family. As to quaternary structure, component of a complex required to couple retrotranslocation, ubiquitination and deglycosylation composed of NGLY1, SAKS1, AMFR, VCP and RAD23B. Interacts with the proteasome components RAD23B and PSMC1. Interacts with directly with VCP. Interacts with DERL1, bringing it close to the endoplasmic reticulum membrane. Interacts with SAKS1. It depends on Zn(2+) as a cofactor. In terms of tissue distribution, ubiquitously expressed with highest level in testis.

The protein resides in the cytoplasm. The catalysed reaction is Hydrolysis of an N(4)-(acetyl-beta-D-glucosaminyl)asparagine residue in which the glucosamine residue may be further glycosylated, to yield a (substituted) N-acetyl-beta-D-glucosaminylamine and a peptide containing an aspartate residue.. With respect to regulation, inhibited by Z-VAD-fmk, a well-known caspase inhibitor, which inhibits enzyme activity through covalent binding of the carbohydrate to the single Cys-306 residue. Specifically deglycosylates the denatured form of N-linked glycoproteins in the cytoplasm and assists their proteasome-mediated degradation. Cleaves the beta-aspartyl-glucosamine (GlcNAc) of the glycan and the amide side chain of Asn, converting Asn to Asp. Prefers proteins containing high-mannose over those bearing complex type oligosaccharides. Can recognize misfolded proteins in the endoplasmic reticulum that are exported to the cytosol to be destroyed and deglycosylate them, while it has no activity toward native proteins. Deglycosylation is a prerequisite for subsequent proteasome-mediated degradation of some, but not all, misfolded glycoproteins. In Mus musculus (Mouse), this protein is Peptide-N(4)-(N-acetyl-beta-glucosaminyl)asparagine amidase (Ngly1).